The chain runs to 658 residues: Transcription factor E2-alpha (658 aa).

6 disordered regions span residues 42-82, 140-191, 276-313, 331-372, 460-558, and 628-658; these read STQF…GTHY, SALS…YPAN, NPSV…GTAT, DHSS…SYDG, VPAQ…ERRV, and EEEK…VGHM. The short motif at 173–179 is the Nuclear localization signal element; that stretch reads PKKVRKV. The segment covering 276–303 has biased composition (polar residues); sequence NPSVTSSFSSTPAQYGVSSHTPPISTGD. Positions 333–344 are enriched in low complexity; sequence SSTNFSSTPSTP. Polar residues predominate over residues 345–355; sequence VGSPQGITGSG. The span at 493–507 shows a compositional bias: basic and acidic residues; sequence PDIKRESKEDEENRS. The segment covering 533 to 544 has biased composition (acidic residues); sequence QDEDEDEDDDNL. Basic and acidic residues predominate over residues 548 to 558; the sequence is QKAEREKERRV. Residues 555 to 608 enclose the bHLH domain; sequence ERRVANNARERLRVKDINEAFKELGRMCQLHLNSEKPQTKLLILHQAVSVILSL.

As to quaternary structure, homodimer. Heterodimer; efficient DNA binding requires dimerization with another bHLH protein. Interacts with tgfb1i1.

The protein resides in the nucleus. Its function is as follows. Transcriptional regulator involved in the initiation of neuronal differentiation and mesenchymal to epithelial transition. Heterodimers between tcf3 and tissue-specific basic helix-loop-helix (bHLH) proteins play major roles in determining tissue-specific cell fate during embryogenesis, like muscle or early B-cell differentiation. Together with tcf15, required for the mesenchymal to epithelial transition. Dimers bind DNA on E-box motifs: 5'-CANNTG-3'. The chain is Transcription factor E2-alpha (tcf3) from Xenopus laevis (African clawed frog).